The following is a 401-amino-acid chain: MSERKLFTSESVSEGHPDKIADQISDAILDAILAKDPEAHVAAETCVYTGSVHVFGEISTTAYVDINRVVRDTIAEIGYTEAEYGFSAESVGVHPSLVEQSPDIAQGVNEALEAREGQSDDFNVIGAGDQGLMFGFAIDETPELMPLPISLSHQLVRRLATLRKSGEISYLRPDAKSQVTVEYDEHDKPVRVDTVVISTQHDPEVSNDQIRQDMIEQVIKAVIPAHYLDEKTRFLINPTGRFVIGGPQGDSGLTGRKIIVDTYGGYARHGGGAFSGKDATKVDRSASYAARYIAKNLVAAGLASKAEVQLAYAIGVAQPVSVRVDTFGTSTVSESILEAAVRQVFDLRPAGIIKMLDLKRPIYKQTAAYGHMGRTDIDLPWEHLDKVSPLTEAVAALSEGA.

An ATP-binding site is contributed by His16. Asp18 contributes to the Mg(2+) binding site. Glu44 contributes to the K(+) binding site. Residues Glu57 and Gln100 each coordinate L-methionine. A flexible loop region spans residues 100–110 (QSPDIAQGVNE). Residues 174–176 (DAK), 241–242 (RF), Asp250, 256–257 (RK), Ala273, and Lys277 contribute to the ATP site. Asp250 is a binding site for L-methionine. An L-methionine-binding site is contributed by Lys281.

The protein belongs to the AdoMet synthase family. As to quaternary structure, homotetramer; dimer of dimers. Mg(2+) serves as cofactor. It depends on K(+) as a cofactor.

It localises to the cytoplasm. It carries out the reaction L-methionine + ATP + H2O = S-adenosyl-L-methionine + phosphate + diphosphate. It participates in amino-acid biosynthesis; S-adenosyl-L-methionine biosynthesis; S-adenosyl-L-methionine from L-methionine: step 1/1. Catalyzes the formation of S-adenosylmethionine (AdoMet) from methionine and ATP. The overall synthetic reaction is composed of two sequential steps, AdoMet formation and the subsequent tripolyphosphate hydrolysis which occurs prior to release of AdoMet from the enzyme. This chain is S-adenosylmethionine synthase, found in Streptococcus equi subsp. zooepidemicus (strain MGCS10565).